The primary structure comprises 417 residues: Hydroxysteroid dehydrogenase-like protein 2 (417 aa).

NADP(+)-binding positions include 17 to 23, lysine 42, and aspartate 74; that span reads GASRGIG. Tyrosine 168 acts as the Proton acceptor in catalysis. Residue lysine 172 coordinates NADP(+). An SCP2 domain is found at 306-414; it reads ASPLQETFKA…KLEKILGQMN (109 aa).

The protein belongs to the short-chain dehydrogenases/reductases (SDR) family.

Its subcellular location is the peroxisome. The protein localises to the mitochondrion. In terms of biological role, has apparently no steroid dehydrogenase activity. Might act as a metabolic regulator that affects systemic adaptation to nutritional cues. The chain is Hydroxysteroid dehydrogenase-like protein 2 (hsdl2) from Xenopus laevis (African clawed frog).